Reading from the N-terminus, the 411-residue chain is Alpha-N-acetylgalactosaminidase (411 aa).

Positions 1–17 (MLLKTVLLLGHVAQVLM) are cleaved as a signal peptide. Cystine bridges form between C38/C80 and C42/C49. Position 78–79 (78–79 (DD)) interacts with substrate. N124 carries an N-linked (GlcNAc...) asparagine glycan. The cysteines at positions 127 and 158 are disulfide-linked. K154 serves as a coordination point for substrate. The active-site Nucleophile is D156. An N-linked (GlcNAc...) asparagine glycan is attached at N177. C187 and C209 are joined by a disulfide. S188 contributes to the substrate binding site. N201 carries an N-linked (GlcNAc...) asparagine glycan. Positions 213 and 217 each coordinate substrate. D217 serves as the catalytic Proton donor. S322 and S332 each carry phosphoserine. N-linked (GlcNAc...) asparagine glycans are attached at residues N359 and N385.

It belongs to the glycosyl hydrolase 27 family. In terms of assembly, homodimer.

It is found in the lysosome. The enzyme catalyses Cleavage of non-reducing alpha-(1-&gt;3)-N-acetylgalactosamine residues from human blood group A and AB mucin glycoproteins, Forssman hapten and blood group A lacto series glycolipids.. The catalysed reaction is a neolactoside IV(3)-alpha-GalNAc,IV(2)-alpha-Fuc-nLc4Cer(d18:1(4E)) + H2O = a neolactoside IV(2)-alpha-Fuc-nLc4Cer(d18:1(4E)) + N-acetyl-alpha-D-galactosamine. It carries out the reaction a neolactoside IV(3)-alpha-GalNAc,IV(2)-alpha-Fuc-nLc4Cer(d18:0) + H2O = a neolactoside IV(2)-alpha-Fuc-nLc4Cer(d18:0) + N-acetyl-alpha-D-galactosamine. It catalyses the reaction a globoside IV3GalNAc-Gb4Cer + H2O = N-acetyl-alpha-D-galactosamine + a globoside Gb4Cer. Removes terminal alpha-N-acetylgalactosamine residues from glycolipids and glycopeptides. Required for the breakdown of glycolipids. The protein is Alpha-N-acetylgalactosaminidase of Homo sapiens (Human).